An 87-amino-acid polypeptide reads, in one-letter code: Toxin Cll5c (87 aa).

Positions M1–A19 are cleaved as a signal peptide. Residues K20–S85 form the LCN-type CS-alpha/beta domain. Cystine bridges form between C31–C84, C35–C60, C44–C65, and C48–C67. Residues K86–K87 constitute a propeptide, removed by a carboxypeptidase.

Belongs to the long (4 C-C) scorpion toxin superfamily. Sodium channel inhibitor family. Beta subfamily. In terms of tissue distribution, expressed by the venom gland.

Its subcellular location is the secreted. Functionally, beta toxins bind voltage-independently at site-4 of sodium channels (Nav) and shift the voltage of activation toward more negative potentials thereby affecting sodium channel activation and promoting spontaneous and repetitive firing. The sequence is that of Toxin Cll5c from Centruroides limpidus (Mexican scorpion).